A 299-amino-acid chain; its full sequence is Centriolar and ciliogenesis-associated protein HYLS1 (299 aa).

S179 carries the phosphoserine modification.

The protein belongs to the HYLS1 family.

The protein localises to the cytoplasm. The protein resides in the cell projection. It is found in the cilium. It localises to the cytoskeleton. Its subcellular location is the microtubule organizing center. The protein localises to the centrosome. The protein resides in the centriole. In terms of biological role, plays a role in ciliogenesis. The chain is Centriolar and ciliogenesis-associated protein HYLS1 from Homo sapiens (Human).